A 463-amino-acid chain; its full sequence is Fumarate hydratase class II (463 aa).

Substrate is bound by residues 95 to 97 (SGT), 126 to 129 (HPND), 136 to 138 (SSN), and Thr-184. Residue His-185 is the Proton donor/acceptor of the active site. The active site involves Ser-315. Residues Ser-316 and 321–323 (KIN) contribute to the substrate site.

The protein belongs to the class-II fumarase/aspartase family. Fumarase subfamily. As to quaternary structure, homotetramer.

Its subcellular location is the cytoplasm. The enzyme catalyses (S)-malate = fumarate + H2O. Its pathway is carbohydrate metabolism; tricarboxylic acid cycle; (S)-malate from fumarate: step 1/1. Its function is as follows. Involved in the TCA cycle. Catalyzes the stereospecific interconversion of fumarate to L-malate. The sequence is that of Fumarate hydratase class II from Chlamydia trachomatis serovar D (strain ATCC VR-885 / DSM 19411 / UW-3/Cx).